The chain runs to 242 residues: Ubiquinone biosynthesis O-methyltransferase (242 aa).

Arg-44, Gly-64, Asp-85, and Met-129 together coordinate S-adenosyl-L-methionine.

This sequence belongs to the methyltransferase superfamily. UbiG/COQ3 family.

The catalysed reaction is a 3-demethylubiquinol + S-adenosyl-L-methionine = a ubiquinol + S-adenosyl-L-homocysteine + H(+). It carries out the reaction a 3-(all-trans-polyprenyl)benzene-1,2-diol + S-adenosyl-L-methionine = a 2-methoxy-6-(all-trans-polyprenyl)phenol + S-adenosyl-L-homocysteine + H(+). Its pathway is cofactor biosynthesis; ubiquinone biosynthesis. O-methyltransferase that catalyzes the 2 O-methylation steps in the ubiquinone biosynthetic pathway. The chain is Ubiquinone biosynthesis O-methyltransferase from Salmonella agona (strain SL483).